Here is a 114-residue protein sequence, read N- to C-terminus: uncharacterized protein (114 aa).

The next 2 membrane-spanning stretches (helical) occupy residues 14-34 and 75-95; these read VMSAIFKWLLLYSLPALCFLL and VIIILVPCWWHAVIVTQHPVA.

The protein localises to the membrane. This is an uncharacterized protein from Homo sapiens (Human).